The sequence spans 327 residues: 2-keto-3-deoxygluconate permease (327 aa).

The next 10 membrane-spanning stretches (helical) occupy residues 10 to 30 (IPGG…TFSP), 42 to 62 (GMIT…GASI), 73 to 93 (KSGT…AIAS), 95 to 115 (IIPE…LALV), 139 to 159 (AGAF…IILG), 163 to 183 (IASF…VGFA), 199 to 219 (VQTL…LTVI), 224 to 244 (LLGI…LIIA), 254 to 274 (TAGI…VLIA), and 289 to 309 (SLVA…TSIW).

This sequence belongs to the KdgT transporter family.

The protein localises to the cell inner membrane. It carries out the reaction 2-dehydro-3-deoxy-D-gluconate(in) + H(+)(in) = 2-dehydro-3-deoxy-D-gluconate(out) + H(+)(out). Catalyzes the proton-dependent uptake of 2-keto-3-deoxygluconate (KDG) into the cell. The chain is 2-keto-3-deoxygluconate permease from Escherichia coli O127:H6 (strain E2348/69 / EPEC).